The sequence spans 242 residues: Uridylate kinase (242 aa).

ATP contacts are provided by residues 15–18 (KISG), Gly58, and Arg62. Residues Asp77 and 139–146 (TGNPFFTT) contribute to the UMP site. ATP-binding residues include Thr166, Tyr172, and Asp175.

This sequence belongs to the UMP kinase family. In terms of assembly, homohexamer.

Its subcellular location is the cytoplasm. It carries out the reaction UMP + ATP = UDP + ADP. The protein operates within pyrimidine metabolism; CTP biosynthesis via de novo pathway; UDP from UMP (UMPK route): step 1/1. Inhibited by UTP. Catalyzes the reversible phosphorylation of UMP to UDP. The polypeptide is Uridylate kinase (Buchnera aphidicola subsp. Acyrthosiphon pisum (strain APS) (Acyrthosiphon pisum symbiotic bacterium)).